Reading from the N-terminus, the 192-residue chain is Guanylate kinase (192 aa).

Positions 7-185 constitute a Guanylate kinase-like domain; that stretch reads GLIIILSSPS…TLKKIHEIIV (179 aa). An ATP-binding site is contributed by 14–21; that stretch reads SPSGTGKS.

Belongs to the guanylate kinase family.

The protein resides in the cytoplasm. It carries out the reaction GMP + ATP = GDP + ADP. Its function is as follows. Essential for recycling GMP and indirectly, cGMP. In Rickettsia felis (strain ATCC VR-1525 / URRWXCal2) (Rickettsia azadi), this protein is Guanylate kinase.